Reading from the N-terminus, the 258-residue chain is Ubiquinone/menaquinone biosynthesis C-methyltransferase UbiE (258 aa).

S-adenosyl-L-methionine-binding positions include Thr-81, Asp-102, and 130–131; that span reads NA.

Belongs to the class I-like SAM-binding methyltransferase superfamily. MenG/UbiE family.

It carries out the reaction a 2-demethylmenaquinol + S-adenosyl-L-methionine = a menaquinol + S-adenosyl-L-homocysteine + H(+). The catalysed reaction is a 2-methoxy-6-(all-trans-polyprenyl)benzene-1,4-diol + S-adenosyl-L-methionine = a 5-methoxy-2-methyl-3-(all-trans-polyprenyl)benzene-1,4-diol + S-adenosyl-L-homocysteine + H(+). Its pathway is quinol/quinone metabolism; menaquinone biosynthesis; menaquinol from 1,4-dihydroxy-2-naphthoate: step 2/2. The protein operates within cofactor biosynthesis; ubiquinone biosynthesis. Its function is as follows. Methyltransferase required for the conversion of demethylmenaquinol (DMKH2) to menaquinol (MKH2) and the conversion of 2-polyprenyl-6-methoxy-1,4-benzoquinol (DDMQH2) to 2-polyprenyl-3-methyl-6-methoxy-1,4-benzoquinol (DMQH2). This chain is Ubiquinone/menaquinone biosynthesis C-methyltransferase UbiE, found in Allorhizobium ampelinum (strain ATCC BAA-846 / DSM 112012 / S4) (Agrobacterium vitis (strain S4)).